The sequence spans 130 residues: Small ribosomal subunit protein uS9 (130 aa).

This sequence belongs to the universal ribosomal protein uS9 family.

This chain is Small ribosomal subunit protein uS9, found in Neisseria meningitidis serogroup C (strain 053442).